A 229-amino-acid polypeptide reads, in one-letter code: uncharacterized protein (229 aa).

The protein to M.pneumoniae MPN_376 central region.

This is an uncharacterized protein from Mycoplasma pneumoniae (strain ATCC 29342 / M129 / Subtype 1) (Mycoplasmoides pneumoniae).